The sequence spans 199 residues: Outer-membrane lipoprotein LolB (199 aa).

The first 28 residues, 1–28 (MAAAGSLCQTAWRVRGWLAAGLCALLAG), serve as a signal peptide directing secretion. The N-palmitoyl cysteine moiety is linked to residue cysteine 29. Cysteine 29 is lipidated: S-diacylglycerol cysteine.

It belongs to the LolB family. In terms of assembly, monomer.

It is found in the cell outer membrane. In terms of biological role, plays a critical role in the incorporation of lipoproteins in the outer membrane after they are released by the LolA protein. This Bordetella petrii (strain ATCC BAA-461 / DSM 12804 / CCUG 43448) protein is Outer-membrane lipoprotein LolB.